The primary structure comprises 274 residues: 2,3,4,5-tetrahydropyridine-2,6-dicarboxylate N-succinyltransferase (274 aa).

Positions 104 and 141 each coordinate substrate.

This sequence belongs to the transferase hexapeptide repeat family. Homotrimer.

The protein resides in the cytoplasm. It catalyses the reaction (S)-2,3,4,5-tetrahydrodipicolinate + succinyl-CoA + H2O = (S)-2-succinylamino-6-oxoheptanedioate + CoA. It functions in the pathway amino-acid biosynthesis; L-lysine biosynthesis via DAP pathway; LL-2,6-diaminopimelate from (S)-tetrahydrodipicolinate (succinylase route): step 1/3. This chain is 2,3,4,5-tetrahydropyridine-2,6-dicarboxylate N-succinyltransferase, found in Shewanella frigidimarina (strain NCIMB 400).